Consider the following 309-residue polypeptide: Sporulation sigma-E factor-processing peptidase (309 aa).

Helical transmembrane passes span 7–27 (VIWL…AFIL), 36–55 (LVGG…TPFS), 61–78 (PAGK…TFGF), 88–105 (LFSF…IIGA), and 130–147 (PISW…WFFS). Aspartate 183 is an active-site residue.

This sequence belongs to the peptidase U4 family. In terms of assembly, self-associates. Interacts with SigE. Interacts with SpoIIR.

Its subcellular location is the cell membrane. Functionally, probable aspartic protease that is responsible for the proteolytic cleavage of the RNA polymerase sigma E factor (SigE/spoIIGB) to yield the active peptide in the mother cell during sporulation. Responds to a signal from the forespore that is triggered by the extracellular signal protein SpoIIR. This is Sporulation sigma-E factor-processing peptidase (spoIIGA) from Bacillus subtilis (strain 168).